We begin with the raw amino-acid sequence, 766 residues long: Protein transport protein Sec23B (766 aa).

A2 is modified (N-acetylalanine). C61, C66, C85, and C88 together coordinate Zn(2+). The residue at position 564 (K564) is an N6-acetyllysine. Residues P633–L719 form a Gelsolin-like repeat.

This sequence belongs to the SEC23/SEC24 family. SEC23 subfamily. In terms of assembly, COPII is composed of at least five proteins: the Sec23/24 complex, the Sec13/31 complex and Sar1. Interacts with SAR1A.

Its subcellular location is the cytoplasmic vesicle. The protein resides in the COPII-coated vesicle membrane. It localises to the endoplasmic reticulum membrane. It is found in the cytoplasm. The protein localises to the cytosol. In terms of biological role, component of the coat protein complex II (COPII) which promotes the formation of transport vesicles from the endoplasmic reticulum (ER). The coat has two main functions, the physical deformation of the endoplasmic reticulum membrane into vesicles and the selection of cargo molecules for their transport to the Golgi complex. The polypeptide is Protein transport protein Sec23B (Pongo abelii (Sumatran orangutan)).